Reading from the N-terminus, the 216-residue chain is uncharacterized protein (216 aa).

This is an uncharacterized protein from Treponema pallidum (strain Nichols).